Consider the following 147-residue polypeptide: Submaxillary gland androgen-regulated protein 3A (147 aa).

The N-terminal stretch at 1–22 (MKPLNLVLGLCILVGCFLSCEC) is a signal peptide. The disordered stretch occupies residues 27–128 (RRHDPRGPFP…ISITTPTARD (102 aa)). The segment covering 33–105 (GPFPPPPPPH…PTPSIPPTGP (73 aa)) has biased composition (pro residues). Repeat copies occupy residues 43-54 (GPGIGRPHPPPF), 55-66 (GPGIGRPPPPPF), and 67-78 (GPGIGRPPPPPP). Positions 43 to 78 (GPGIGRPHPPPFGPGIGRPPPPPFGPGIGRPPPPPP) are 3 X 12 AA tandem repeats of G-P-G-I-G-R-P-[HP]-P-P-P-[PF]. A compositionally biased stretch (polar residues) spans 108 to 127 (TVQATTMPAASISITTPTAR).

Belongs to the PROL1/PROL3 family. In terms of tissue distribution, secreted into saliva by submaxillary gland.

The protein resides in the secreted. May play a role in protection or detoxification. This Mus musculus (Mouse) protein is Submaxillary gland androgen-regulated protein 3A (Smr3a).